Reading from the N-terminus, the 739-residue chain is UPF0313 protein YgiQ (739 aa).

Residues 372–650 (AYEMIRFSVN…KALLRYHDPA (279 aa)) enclose the Radical SAM core domain. 3 residues coordinate [4Fe-4S] cluster: Cys386, Cys390, and Cys393. Residues 686 to 739 (EARRQNRNTRPALTKHTPMATQCQTPATAKKASSTQSRPVNAGAKKRPKAAVGR) form a disordered region. The span at 704–724 (MATQCQTPATAKKASSTQSRP) shows a compositional bias: polar residues. Residues 729 to 739 (AKKRPKAAVGR) show a composition bias toward basic residues.

This sequence belongs to the UPF0313 family. It depends on [4Fe-4S] cluster as a cofactor.

This Escherichia coli O157:H7 protein is UPF0313 protein YgiQ.